The following is a 186-amino-acid chain: Adenine phosphoribosyltransferase (186 aa).

The protein belongs to the purine/pyrimidine phosphoribosyltransferase family. In terms of assembly, homodimer.

Its subcellular location is the cytoplasm. It catalyses the reaction AMP + diphosphate = 5-phospho-alpha-D-ribose 1-diphosphate + adenine. It participates in purine metabolism; AMP biosynthesis via salvage pathway; AMP from adenine: step 1/1. Its function is as follows. Catalyzes a salvage reaction resulting in the formation of AMP, that is energically less costly than de novo synthesis. This Xanthomonas euvesicatoria pv. vesicatoria (strain 85-10) (Xanthomonas campestris pv. vesicatoria) protein is Adenine phosphoribosyltransferase.